The following is a 429-amino-acid chain: Phosphoribosylamine--glycine ligase (429 aa).

Residues 109–316 (KDFLARHKIP…LVELCLAACE (208 aa)) form the ATP-grasp domain. 135–196 (LREKGAPIVI…EEFLDGEEAS (62 aa)) provides a ligand contact to ATP. The interval 212 to 236 (SQDHKRVGDKDTGPNTGGMGAYSPA) is disordered. The span at 213–223 (QDHKRVGDKDT) shows a compositional bias: basic and acidic residues. Mg(2+)-binding residues include Glu286 and Asn288.

Belongs to the GARS family. In terms of assembly, monomer. It depends on Mg(2+) as a cofactor. Mn(2+) is required as a cofactor.

It catalyses the reaction 5-phospho-beta-D-ribosylamine + glycine + ATP = N(1)-(5-phospho-beta-D-ribosyl)glycinamide + ADP + phosphate + H(+). It participates in purine metabolism; IMP biosynthesis via de novo pathway; N(1)-(5-phospho-D-ribosyl)glycinamide from 5-phospho-alpha-D-ribose 1-diphosphate: step 2/2. In terms of biological role, catalyzes the reversible conversion of phosphoribosylamine to glycinamide ribonucleotide, an enzymatic step in purine biosynthesis pathway. This Escherichia coli (strain K12) protein is Phosphoribosylamine--glycine ligase (purD).